A 243-amino-acid polypeptide reads, in one-letter code: MGKRIRPQRLGRGGPTYRAPSHRYRGRIEHRPYDEQEKKGKVVGKVVELLHDPARNAPVARVRFEDGEERLILVPEGTKVGDIIECGVSAEIKPGNTLPLAEIPEGVPIFNIEGQPGDGGKFARAPGCYATIIAHDVGRTYVQLPSGKVRTFDPRCRATIGVMSGGGKREKPFVKAGKKYYHMRSKGGKWPKVRGVAMNAVDHPFGGGNHQSPGKPTTIARGDPPGRKVGHIAARKTGRGGRR.

Disordered stretches follow at residues 1–23 (MGKRIRPQRLGRGGPTYRAPSHR) and 204–243 (PFGGGNHQSPGKPTTIARGDPPGRKVGHIAARKTGRGGRR). Basic residues predominate over residues 228 to 243 (KVGHIAARKTGRGGRR).

This sequence belongs to the universal ribosomal protein uL2 family. In terms of assembly, part of the 50S ribosomal subunit. Forms a bridge to the 30S subunit in the 70S ribosome.

Functionally, one of the primary rRNA binding proteins. Required for association of the 30S and 50S subunits to form the 70S ribosome, for tRNA binding and peptide bond formation. It has been suggested to have peptidyltransferase activity; this is somewhat controversial. Makes several contacts with the 16S rRNA in the 70S ribosome. The sequence is that of Large ribosomal subunit protein uL2 from Methanopyrus kandleri (strain AV19 / DSM 6324 / JCM 9639 / NBRC 100938).